A 119-amino-acid polypeptide reads, in one-letter code: MIKKETVLDVADNSGARKVLCIGISGSKKTASIGDVITVSVKKCIPVGKVSAGSIHRAVVVRVKKRSSSSIVVFGDNAVVLLNKQNEMIGTRVFGPTDSLLRRNKGFAKISSLSQEVFQ.

Belongs to the universal ribosomal protein uL14 family. Part of the 50S ribosomal subunit. Forms a cluster with proteins L3 and L19. In the 70S ribosome, L14 and L19 interact and together make contacts with the 16S rRNA in bridges B5 and B8.

In terms of biological role, binds to 23S rRNA. Forms part of two intersubunit bridges in the 70S ribosome. The polypeptide is Large ribosomal subunit protein uL14 (Neorickettsia sennetsu (strain ATCC VR-367 / Miyayama) (Ehrlichia sennetsu)).